We begin with the raw amino-acid sequence, 586 residues long: Proline--tRNA ligase (586 aa).

This sequence belongs to the class-II aminoacyl-tRNA synthetase family. ProS type 1 subfamily. As to quaternary structure, homodimer.

The protein resides in the cytoplasm. The enzyme catalyses tRNA(Pro) + L-proline + ATP = L-prolyl-tRNA(Pro) + AMP + diphosphate. Functionally, catalyzes the attachment of proline to tRNA(Pro) in a two-step reaction: proline is first activated by ATP to form Pro-AMP and then transferred to the acceptor end of tRNA(Pro). As ProRS can inadvertently accommodate and process non-cognate amino acids such as alanine and cysteine, to avoid such errors it has two additional distinct editing activities against alanine. One activity is designated as 'pretransfer' editing and involves the tRNA(Pro)-independent hydrolysis of activated Ala-AMP. The other activity is designated 'posttransfer' editing and involves deacylation of mischarged Ala-tRNA(Pro). The misacylated Cys-tRNA(Pro) is not edited by ProRS. The sequence is that of Proline--tRNA ligase from Leptospira biflexa serovar Patoc (strain Patoc 1 / Ames).